A 432-amino-acid polypeptide reads, in one-letter code: Guanine nucleotide-binding protein subunit alpha (432 aa).

Residues 1–97 form a disordered region; the sequence is MGGCMSTPEA…SKGNKDRSNQ (97 aa). A lipid anchor (N-myristoyl glycine) is attached at G2. A lipid anchor (S-palmitoyl cysteine) is attached at C4. A compositionally biased stretch (low complexity) spans 21-52; that stretch reads PSTSTSSRPPQASTSATATAAGAGTSAANGTA. Residues 111 to 432 enclose the G-alpha domain; that stretch reads KECKILLLGS…QNALRDSGIL (322 aa). A G1 motif region spans residues 114–127; it reads KILLLGSGESGKST. E122, S123, G124, K125, S126, T127, D230, L255, T261, G283, N349, K350, D352, and A404 together coordinate GTP. Residue S126 coordinates Mg(2+). Positions 253 to 261 are G2 motif; it reads DVLRARTKT. T261 lines the Mg(2+) pocket. Residues 276–285 form a G3 motif region; it reads IHMFDVGGQR. Residues 345–352 are G4 motif; that stretch reads ILFLNKID. A G5 motif region spans residues 402-407; it reads TQATDT.

It belongs to the G-alpha family. As to quaternary structure, g proteins are composed of 3 units; alpha, beta and gamma. The alpha chain contains the guanine nucleotide binding site. Requires Mg(2+) as cofactor.

Guanine nucleotide-binding proteins (G proteins) are involved as modulators or transducers in various transmembrane signaling systems. Involved in the mating pathway. The chain is Guanine nucleotide-binding protein subunit alpha (GPA1) from Cryptococcus neoformans var. neoformans serotype D (strain B-3501A) (Filobasidiella neoformans).